We begin with the raw amino-acid sequence, 176 residues long: MTTILSVRLKNKVVIGGDGQATLGNTIMKSNVKKIRSLYHEKVIAGFAGGTADAFTLFEMFDKKLAMYQGQLQRAAIELAKDWRSDRMLRKLEALLAVADKKTSLIITGNGDVIQPEDDLIAIGSGGSYAQSSARALIENTHLDANQIVRKSLNIAANICIYTNHNFTIKELFSEK.

Residue Thr-2 is part of the active site. Ala-157, Cys-160, and Thr-163 together coordinate Na(+).

This sequence belongs to the peptidase T1B family. HslV subfamily. As to quaternary structure, a double ring-shaped homohexamer of HslV is capped on each side by a ring-shaped HslU homohexamer. The assembly of the HslU/HslV complex is dependent on binding of ATP.

The protein localises to the cytoplasm. The catalysed reaction is ATP-dependent cleavage of peptide bonds with broad specificity.. With respect to regulation, allosterically activated by HslU binding. Its function is as follows. Protease subunit of a proteasome-like degradation complex believed to be a general protein degrading machinery. The protein is ATP-dependent protease subunit HslV of Buchnera aphidicola subsp. Acyrthosiphon pisum (strain APS) (Acyrthosiphon pisum symbiotic bacterium).